Consider the following 261-residue polypeptide: Triosephosphate isomerase (261 aa).

10 to 12 lines the substrate pocket; the sequence is NWK. H100 acts as the Electrophile in catalysis. E172 functions as the Proton acceptor in the catalytic mechanism. Substrate is bound by residues G178, S218, and 239 to 240; that span reads GG.

It belongs to the triosephosphate isomerase family. Homodimer.

The protein localises to the cytoplasm. It catalyses the reaction D-glyceraldehyde 3-phosphate = dihydroxyacetone phosphate. It functions in the pathway carbohydrate biosynthesis; gluconeogenesis. The protein operates within carbohydrate degradation; glycolysis; D-glyceraldehyde 3-phosphate from glycerone phosphate: step 1/1. In terms of biological role, involved in the gluconeogenesis. Catalyzes stereospecifically the conversion of dihydroxyacetone phosphate (DHAP) to D-glyceraldehyde-3-phosphate (G3P). This is Triosephosphate isomerase from Mycobacterium avium (strain 104).